Reading from the N-terminus, the 72-residue chain is Translational regulator CsrA (72 aa).

It belongs to the CsrA/RsmA family. Homodimer; the beta-strands of each monomer intercalate to form a hydrophobic core, while the alpha-helices form wings that extend away from the core.

The protein resides in the cytoplasm. Functionally, a translational regulator that binds mRNA to regulate translation initiation and/or mRNA stability. Usually binds in the 5'-UTR at or near the Shine-Dalgarno sequence preventing ribosome-binding, thus repressing translation. Its main target seems to be the major flagellin gene, while its function is anatagonized by FliW. In Clostridium botulinum (strain 657 / Type Ba4), this protein is Translational regulator CsrA.